The following is a 269-amino-acid chain: MTHLERSRHQQFPFHLVAPSPWPIVVSFALMSLALSLALTMHGYIGHMYLIYLSILTVTLSATLWFRDIIAEATYLGDHTIAVRKGINLGFLLFVVSEILIFAALFWAYFHSAMSPNIELGGVWPPVGIQAVQPTELPLLNTIILLSSGATITYSHHGLVGGNRKNALSGLLITFWLIVIFVTCQYIEYTNATFTITDGVYGSVFYAGTGLHFLHMVMLAAMLGINYWRLRNYHLTATHHVGYETTVLYCHILDIIWLFLYIVFYWWGV.

Transmembrane regions (helical) follow at residues 21 to 41 (PWPIVVSFALMSLALSLALTM), 45 to 65 (IGHMYLIYLSILTVTLSATLW), 90 to 110 (GFLLFVVSEILIFAALFWAYF), 138 to 160 (PLLNTIILLSSGATITYSHHGLV), 167 to 187 (ALSGLLITFWLIVIFVTCQYI), 205 to 225 (FYAGTGLHFLHMVMLAAMLGI), and 247 to 267 (VLYCHILDIIWLFLYIVFYWW).

This sequence belongs to the cytochrome c oxidase subunit 3 family. In terms of assembly, component of the cytochrome c oxidase (complex IV, CIV), a multisubunit enzyme composed of a catalytic core of 3 subunits and several supernumerary subunits. The complex exists as a monomer or a dimer and forms supercomplexes (SCs) in the inner mitochondrial membrane with ubiquinol-cytochrome c oxidoreductase (cytochrome b-c1 complex, complex III, CIII).

The protein resides in the mitochondrion inner membrane. It catalyses the reaction 4 Fe(II)-[cytochrome c] + O2 + 8 H(+)(in) = 4 Fe(III)-[cytochrome c] + 2 H2O + 4 H(+)(out). Its function is as follows. Component of the cytochrome c oxidase, the last enzyme in the mitochondrial electron transport chain which drives oxidative phosphorylation. The respiratory chain contains 3 multisubunit complexes succinate dehydrogenase (complex II, CII), ubiquinol-cytochrome c oxidoreductase (cytochrome b-c1 complex, complex III, CIII) and cytochrome c oxidase (complex IV, CIV), that cooperate to transfer electrons derived from NADH and succinate to molecular oxygen, creating an electrochemical gradient over the inner membrane that drives transmembrane transport and the ATP synthase. Cytochrome c oxidase is the component of the respiratory chain that catalyzes the reduction of oxygen to water. Electrons originating from reduced cytochrome c in the intermembrane space (IMS) are transferred via the dinuclear copper A center (CU(A)) of subunit 2 and heme A of subunit 1 to the active site in subunit 1, a binuclear center (BNC) formed by heme A3 and copper B (CU(B)). The BNC reduces molecular oxygen to 2 water molecules using 4 electrons from cytochrome c in the IMS and 4 protons from the mitochondrial matrix. The polypeptide is Cytochrome c oxidase subunit 3 (COX3) (Kluyveromyces lactis (strain ATCC 8585 / CBS 2359 / DSM 70799 / NBRC 1267 / NRRL Y-1140 / WM37) (Yeast)).